The chain runs to 492 residues: Putative heme-binding protein VNG_2021C (492 aa).

His177 contributes to the heme binding site. The tract at residues 253-301 (AGERVPAPEGGADAHGEGERTHHHGDSDHHDGDDGEQHHHSTGDEADDG) is disordered. A compositionally biased stretch (basic and acidic residues) spans 264 to 301 (ADAHGEGERTHHHGDSDHHDGDDGEQHHHSTGDEADDG). Residues 402-490 (GTMGMFYETK…VLADRPRHVF (89 aa)) enclose the ABM domain.

This sequence in the N-terminal section; belongs to the ChdC family.

The protein is Putative heme-binding protein VNG_2021C of Halobacterium salinarum (strain ATCC 700922 / JCM 11081 / NRC-1) (Halobacterium halobium).